A 99-amino-acid chain; its full sequence is Large ribosomal subunit protein uL23 (99 aa).

It belongs to the universal ribosomal protein uL23 family. As to quaternary structure, part of the 50S ribosomal subunit. Contacts protein L29, and trigger factor when it is bound to the ribosome.

In terms of biological role, one of the early assembly proteins it binds 23S rRNA. One of the proteins that surrounds the polypeptide exit tunnel on the outside of the ribosome. Forms the main docking site for trigger factor binding to the ribosome. This chain is Large ribosomal subunit protein uL23, found in Francisella tularensis subsp. holarctica (strain OSU18).